We begin with the raw amino-acid sequence, 449 residues long: Tubulin alpha-2 chain (449 aa).

Gln-11 contacts GTP. Lys-40 carries the N6-acetyllysine modification. Glu-71, Ser-140, Gly-144, Thr-145, Thr-179, Asn-206, and Asn-228 together coordinate GTP. Glu-71 provides a ligand contact to Mg(2+). Glu-254 is an active-site residue.

It belongs to the tubulin family. As to quaternary structure, dimer of alpha and beta chains. A typical microtubule is a hollow water-filled tube with an outer diameter of 25 nm and an inner diameter of 15 nM. Alpha-beta heterodimers associate head-to-tail to form protofilaments running lengthwise along the microtubule wall with the beta-tubulin subunit facing the microtubule plus end conferring a structural polarity. Microtubules usually have 13 protofilaments but different protofilament numbers can be found in some organisms and specialized cells. Requires Mg(2+) as cofactor. Undergoes a tyrosination/detyrosination cycle, the cyclic removal and re-addition of a C-terminal tyrosine residue by the enzymes tubulin tyrosine carboxypeptidase (TTCP) and tubulin tyrosine ligase (TTL), respectively. Post-translationally, acetylation of alpha chains at Lys-40 stabilizes microtubules and affects affinity and processivity of microtubule motors. This modification has a role in multiple cellular functions, ranging from cell motility, cell cycle progression or cell differentiation to intracellular trafficking and signaling. During the early stages of oogenesis lky/Alpha-tubulin N-acetyltransferase 2 is the main acetyltransferase responsible for Lys-40 acetylation in germline cells while Atat/alpha-tubulin N-acetyltransferase 1 is the main acetyltransferase responsible for Lys-40 acetylation in somatic cells.

The protein resides in the cytoplasm. It is found in the cytoskeleton. It carries out the reaction GTP + H2O = GDP + phosphate + H(+). In terms of biological role, tubulin is the major constituent of microtubules, a cylinder consisting of laterally associated linear protofilaments composed of alpha- and beta-tubulin heterodimers. Microtubules grow by the addition of GTP-tubulin dimers to the microtubule end, where a stabilizing cap forms. Below the cap, tubulin dimers are in GDP-bound state, owing to GTPase activity of alpha-tubulin. The chain is Tubulin alpha-2 chain (alphaTub85E) from Drosophila melanogaster (Fruit fly).